The primary structure comprises 395 residues: Phosphoglycerate kinase (395 aa).

Substrate contacts are provided by residues 22-24 (DLN), Arg37, 60-63 (HFGR), Arg116, and Arg149. Residues Lys199, Glu322, and 352 to 355 (GGDT) each bind ATP.

Belongs to the phosphoglycerate kinase family. As to quaternary structure, monomer.

It is found in the cytoplasm. The enzyme catalyses (2R)-3-phosphoglycerate + ATP = (2R)-3-phospho-glyceroyl phosphate + ADP. It participates in carbohydrate degradation; glycolysis; pyruvate from D-glyceraldehyde 3-phosphate: step 2/5. The sequence is that of Phosphoglycerate kinase from Novosphingobium aromaticivorans (strain ATCC 700278 / DSM 12444 / CCUG 56034 / CIP 105152 / NBRC 16084 / F199).